A 158-amino-acid polypeptide reads, in one-letter code: 6,7-dimethyl-8-ribityllumazine synthase 2 (158 aa).

5-amino-6-(D-ribitylamino)uracil contacts are provided by residues W20, 54–56 (AYE), and 78–80 (FVI). R86 acts as the Proton donor in catalysis. S111 lines the 5-amino-6-(D-ribitylamino)uracil pocket. Residue H125 participates in (2S)-2-hydroxy-3-oxobutyl phosphate binding.

It belongs to the DMRL synthase family. As to quaternary structure, homodecamer, arranged as a dimer of pentamers.

Its subcellular location is the cytoplasm. The enzyme catalyses (2S)-2-hydroxy-3-oxobutyl phosphate + 5-amino-6-(D-ribitylamino)uracil = 6,7-dimethyl-8-(1-D-ribityl)lumazine + phosphate + 2 H2O + H(+). It functions in the pathway cofactor biosynthesis; riboflavin biosynthesis; riboflavin from 2-hydroxy-3-oxobutyl phosphate and 5-amino-6-(D-ribitylamino)uracil: step 1/2. Its function is as follows. Catalyzes the formation of 6,7-dimethyl-8-ribityllumazine by condensation of 5-amino-6-(D-ribitylamino)uracil with 3,4-dihydroxy-2-butanone 4-phosphate. This is the penultimate step in the biosynthesis of riboflavin. The isozyme RibH2 but not RibH1 is essential for Brucella intracellular survival and replication inside macrophages or in mice. Displays low catalytic activity in comparison with the isozyme RibH1. Is a highly immunogenic protein. Activates dendritic cells (DCs) in vitro, increasing the levels of costimulatory molecules and the secretion of pro-inflammatory cytokines, and recruits DCs, B cells and CD8+ T cells in vivo, both effects in a TLR4-dependent manner. Induces the cross presentation of covalently attached peptides and generates a strong and long-lasting humoral immune response without adjuvants; TLR4 signaling is necessary for the induction of the cytotoxic response but not for antigen cross presentation. Elicits a TLR4-mediated protective response against B16 melanoma in mice, slowing tumor growth and prolonging mice survival. The sequence is that of 6,7-dimethyl-8-ribityllumazine synthase 2 from Brucella abortus (strain 2308).